The chain runs to 446 residues: Divalent metal cation transporter MntH (446 aa).

11 consecutive transmembrane segments (helical) span residues 32-52 (LAFL…GNWI), 59-79 (AQFG…AMLL), 107-127 (AIIF…AEVI), 139-159 (IPLI…LFIM), 168-188 (AIVG…VYIS), 205-225 (IIAN…TIMP), 264-284 (SIAF…FYGV), 303-323 (PVLG…ALLA), 355-375 (LVTR…FRGN), 381-401 (QLLV…LIPL), and 420-440 (VNIC…YLII).

The protein belongs to the NRAMP family.

The protein localises to the cell membrane. Functionally, h(+)-stimulated, divalent metal cation uptake system. This is Divalent metal cation transporter MntH from Staphylococcus haemolyticus (strain JCSC1435).